We begin with the raw amino-acid sequence, 380 residues long: S-phase entry cyclin-6 (380 aa).

The segment at 63-91 is disordered; the sequence is PRGKLQRDSTHLEKTRKRQLSNDSTDPIE.

Belongs to the cyclin family. Cyclin AB subfamily.

Functionally, involved in G1/S and or S phase progression. Interacts with CDC28. The sequence is that of S-phase entry cyclin-6 (CLB6) from Saccharomyces cerevisiae (strain ATCC 204508 / S288c) (Baker's yeast).